Here is a 362-residue protein sequence, read N- to C-terminus: Probable dual-specificity RNA methyltransferase RlmN (362 aa).

Residue glutamate 105 is the Proton acceptor of the active site. A Radical SAM core domain is found at 111 to 344 (HEYGNSICVT…VTIRREQGHD (234 aa)). Cysteine 118 and cysteine 349 are oxidised to a cystine. Positions 125, 129, and 132 each coordinate [4Fe-4S] cluster. Residues 175-176 (GE), serine 207, 230-232 (SLH), and asparagine 306 each bind S-adenosyl-L-methionine. Cysteine 349 (S-methylcysteine intermediate) is an active-site residue.

The protein belongs to the radical SAM superfamily. RlmN family. It depends on [4Fe-4S] cluster as a cofactor.

The protein resides in the cytoplasm. The enzyme catalyses adenosine(2503) in 23S rRNA + 2 reduced [2Fe-2S]-[ferredoxin] + 2 S-adenosyl-L-methionine = 2-methyladenosine(2503) in 23S rRNA + 5'-deoxyadenosine + L-methionine + 2 oxidized [2Fe-2S]-[ferredoxin] + S-adenosyl-L-homocysteine. It catalyses the reaction adenosine(37) in tRNA + 2 reduced [2Fe-2S]-[ferredoxin] + 2 S-adenosyl-L-methionine = 2-methyladenosine(37) in tRNA + 5'-deoxyadenosine + L-methionine + 2 oxidized [2Fe-2S]-[ferredoxin] + S-adenosyl-L-homocysteine. Specifically methylates position 2 of adenine 2503 in 23S rRNA and position 2 of adenine 37 in tRNAs. This is Probable dual-specificity RNA methyltransferase RlmN from Bacillus anthracis (strain A0248).